Consider the following 333-residue polypeptide: Tetraacyldisaccharide 4'-kinase (333 aa).

55 to 62 lines the ATP pocket; it reads TIGGNGKT.

Belongs to the LpxK family.

The catalysed reaction is a lipid A disaccharide + ATP = a lipid IVA + ADP + H(+). It participates in glycolipid biosynthesis; lipid IV(A) biosynthesis; lipid IV(A) from (3R)-3-hydroxytetradecanoyl-[acyl-carrier-protein] and UDP-N-acetyl-alpha-D-glucosamine: step 6/6. In terms of biological role, transfers the gamma-phosphate of ATP to the 4'-position of a tetraacyldisaccharide 1-phosphate intermediate (termed DS-1-P) to form tetraacyldisaccharide 1,4'-bis-phosphate (lipid IVA). The protein is Tetraacyldisaccharide 4'-kinase of Blochmanniella floridana.